The chain runs to 260 residues: Imidazole glycerol phosphate synthase subunit HisF (260 aa).

Catalysis depends on residues aspartate 11 and aspartate 130.

The protein belongs to the HisA/HisF family. Heterodimer of HisH and HisF.

It is found in the cytoplasm. It carries out the reaction 5-[(5-phospho-1-deoxy-D-ribulos-1-ylimino)methylamino]-1-(5-phospho-beta-D-ribosyl)imidazole-4-carboxamide + L-glutamine = D-erythro-1-(imidazol-4-yl)glycerol 3-phosphate + 5-amino-1-(5-phospho-beta-D-ribosyl)imidazole-4-carboxamide + L-glutamate + H(+). It participates in amino-acid biosynthesis; L-histidine biosynthesis; L-histidine from 5-phospho-alpha-D-ribose 1-diphosphate: step 5/9. Functionally, IGPS catalyzes the conversion of PRFAR and glutamine to IGP, AICAR and glutamate. The HisF subunit catalyzes the cyclization activity that produces IGP and AICAR from PRFAR using the ammonia provided by the HisH subunit. The protein is Imidazole glycerol phosphate synthase subunit HisF of Psychrobacter cryohalolentis (strain ATCC BAA-1226 / DSM 17306 / VKM B-2378 / K5).